The chain runs to 175 residues: MKAQPTLIALGRIIGVHGVRGWVKIHSECRPREAIFNYSVFQATRHHHAQTLKLLDARRSGKSLIALFADICDRDAALQLNGFTLNVTRADLPQLKNGQYYWTDVLGLTVINRSGEHLGKVCDIFETGANDVLVINKDGQEYLIPFISERYIDRIDFENKYLYVDWQMAWTDDAD.

Residues 97–170 (NGQYYWTDVL…YLYVDWQMAW (74 aa)) form the PRC barrel domain.

It belongs to the RimM family. In terms of assembly, binds ribosomal protein uS19.

Its subcellular location is the cytoplasm. Its function is as follows. An accessory protein needed during the final step in the assembly of 30S ribosomal subunit, possibly for assembly of the head region. Essential for efficient processing of 16S rRNA. May be needed both before and after RbfA during the maturation of 16S rRNA. It has affinity for free ribosomal 30S subunits but not for 70S ribosomes. This chain is Ribosome maturation factor RimM, found in Dichelobacter nodosus (strain VCS1703A).